The following is a 200-amino-acid chain: Ribonuclease HII (200 aa).

The RNase H type-2 domain maps to 1 to 200 (MRYGGVDEAG…EINKKLTDFI (200 aa)). The a divalent metal cation site is built by D7, E8, and D99.

This sequence belongs to the RNase HII family. Requires Mn(2+) as cofactor. Mg(2+) serves as cofactor.

It localises to the cytoplasm. The catalysed reaction is Endonucleolytic cleavage to 5'-phosphomonoester.. In terms of biological role, endonuclease that specifically degrades the RNA of RNA-DNA hybrids. This is Ribonuclease HII from Nanoarchaeum equitans (strain Kin4-M).